The primary structure comprises 200 residues: LexA repressor (200 aa).

Residues 28–48 constitute a DNA-binding region (H-T-H motif); the sequence is RAEIAEILGFKSANAAEEHLK. Active-site for autocatalytic cleavage activity residues include serine 118 and lysine 155.

This sequence belongs to the peptidase S24 family. In terms of assembly, homodimer.

The catalysed reaction is Hydrolysis of Ala-|-Gly bond in repressor LexA.. In terms of biological role, represses a number of genes involved in the response to DNA damage (SOS response), including recA and lexA. In the presence of single-stranded DNA, RecA interacts with LexA causing an autocatalytic cleavage which disrupts the DNA-binding part of LexA, leading to derepression of the SOS regulon and eventually DNA repair. This is LexA repressor from Teredinibacter turnerae (strain ATCC 39867 / T7901).